Consider the following 64-residue polypeptide: Toxin BmKIT3 (64 aa).

An LCN-type CS-alpha/beta domain is found at 1–61; sequence DGYIRGSNGC…TWKSESNTCG (61 aa). Intrachain disulfides connect Cys10-Cys60, Cys14-Cys35, Cys21-Cys42, and Cys25-Cys44. Cys60 bears the Cysteine amide mark.

This sequence belongs to the long (4 C-C) scorpion toxin superfamily. Sodium channel inhibitor family. Beta subfamily. Expressed by the venom gland.

The protein resides in the secreted. Depressant insect beta-toxins cause a transient contraction paralysis followed by a slow flaccid paralysis. They bind voltage-independently at site-4 of sodium channels (Nav) and shift the voltage of activation toward more negative potentials thereby affecting sodium channel activation and promoting spontaneous and repetitive firing. The protein is Toxin BmKIT3 of Olivierus martensii (Manchurian scorpion).